We begin with the raw amino-acid sequence, 435 residues long: Serine carboxypeptidase-like 16 (435 aa).

The N-terminal stretch at Met-1–Ser-23 is a signal peptide. Cystine bridges form between Cys-82–Cys-325, Cys-246–Cys-260, and Cys-284–Cys-291. Asn-103 carries an N-linked (GlcNAc...) asparagine glycan. Ser-178 is a catalytic residue. An N-linked (GlcNAc...) asparagine glycan is attached at Asn-305. Asp-360 is an active-site residue. Residue Asn-376 is glycosylated (N-linked (GlcNAc...) asparagine). Residue His-413 is part of the active site.

It belongs to the peptidase S10 family. In terms of tissue distribution, expressed in seedlings, roots and leaves.

It is found in the secreted. Its function is as follows. Probable carboxypeptidase. The polypeptide is Serine carboxypeptidase-like 16 (SCPL16) (Arabidopsis thaliana (Mouse-ear cress)).